The sequence spans 1347 residues: Agglutinin-like protein 5 (1347 aa).

A signal peptide spans 1–19; that stretch reads MIQQFTLLFLYLSFATAKA. 4 cysteine pairs are disulfide-bonded: Cys-73–Cys-150, Cys-96–Cys-112, Cys-205–Cys-298, and Cys-227–Cys-256. ALS repeat units follow at residues 365–396, 401–432, 438–469, 474–505, 510–541, and 546–577; these read TTIT…VDVP, TTVT…VQVP, TTTT…VREP, VTTT…VREP, VTTT…IKEP, and VTTT…IHDP. Disordered regions lie at residues 580 to 678, 704 to 725, and 789 to 813; these read ESSS…WDSS, VSNS…SNTS, and SDPT…FSDE. Residues Asn-593 and Asn-723 are each glycosylated (N-linked (GlcNAc...) asparagine). The N-linked (GlcNAc...) asparagine glycan is linked to Asn-847. 5 disordered regions span residues 855–896, 909–964, 977–1021, 1062–1111, and 1139–1180; these read ESES…STVT, TGMP…KSSV, SETS…KESS, EDNE…VSSL, and ATSL…NRLS. 3 stretches are compositionally biased toward low complexity: residues 856–870, 879–896, and 921–939; these read SESS…ASES, SEST…STVT, and TSDV…PTSA. The segment covering 940 to 950 has biased composition (polar residues); that stretch reads EQSITDNPNID. Low complexity-rich tracts occupy residues 951-964 and 977-1002; these read SSQT…KSSV and SETS…NSDT. Composition is skewed to polar residues over residues 1003 to 1021 and 1066 to 1088; these read GNIN…KESS and PNTF…SVLS. 2 stretches are compositionally biased toward low complexity: residues 1097–1111 and 1140–1158; these read IKTS…VSSL and TSLR…SSGT. N-linked (GlcNAc...) asparagine glycans are attached at residues Asn-1229 and Asn-1254. Ser-1326 carries the GPI-anchor amidated serine lipid modification. A propeptide spans 1327–1347 (removed in mature form); sequence SATKHPSWLLKFISVALFFFL.

The protein belongs to the ALS family. Forms homodimers through the tandem repeats. Aggregates in amyloid-like structures, with self-propagating secondary-structure changes, amyloid-characteristic dye binding, and induced birefringence. In terms of processing, the GPI-anchor is attached to the protein in the endoplasmic reticulum and serves to target the protein to the cell surface. There, the glucosamine-inositol phospholipid moiety is cleaved off and the GPI-modified mannoprotein is covalently attached via its lipidless GPI glycan remnant to the 1,6-beta-glucan of the outer cell wall layer.

It localises to the cell membrane. It is found in the secreted. Its subcellular location is the cell wall. In terms of biological role, cell surface adhesion protein which mediates both yeast-to-host tissue adherence and yeast aggregation. Plays an important role in the pathogenesis of C.albicans infections. Forms amyloid structures, essential for cell-cell association and cell-substrate adhesion to polystyrene. This is Agglutinin-like protein 5 (ALS5) from Candida albicans (strain SC5314 / ATCC MYA-2876) (Yeast).